Reading from the N-terminus, the 502-residue chain is Glycerol kinase (502 aa).

Residue T14 coordinates ADP. ATP is bound by residues T14, T15, and S16. Residue T14 coordinates sn-glycerol 3-phosphate. ADP is bound at residue R18. Residues R84, E85, Y136, and D246 each coordinate sn-glycerol 3-phosphate. The glycerol site is built by R84, E85, Y136, D246, and Q247. T268 and G311 together coordinate ADP. ATP contacts are provided by T268, G311, Q315, and G412. 2 residues coordinate ADP: G412 and N416.

This sequence belongs to the FGGY kinase family. As to quaternary structure, homotetramer and homodimer (in equilibrium). Heterodimer with EIIA-Glc. Binds 1 zinc ion per glycerol kinase EIIA-Glc dimer. The zinc ion is important for dimerization.

The catalysed reaction is glycerol + ATP = sn-glycerol 3-phosphate + ADP + H(+). It participates in polyol metabolism; glycerol degradation via glycerol kinase pathway; sn-glycerol 3-phosphate from glycerol: step 1/1. Activity of this regulatory enzyme is affected by several metabolites. Allosterically and non-competitively inhibited by fructose 1,6-bisphosphate (FBP) and unphosphorylated phosphocarrier protein EIIA-Glc (III-Glc), an integral component of the bacterial phosphotransferase (PTS) system. In terms of biological role, key enzyme in the regulation of glycerol uptake and metabolism. Catalyzes the phosphorylation of glycerol to yield sn-glycerol 3-phosphate. In Escherichia coli (strain ATCC 8739 / DSM 1576 / NBRC 3972 / NCIMB 8545 / WDCM 00012 / Crooks), this protein is Glycerol kinase.